The sequence spans 459 residues: Ceramide glucosyltransferase 3 (459 aa).

A helical membrane pass occupies residues 77–97 (LIAIVGFVFVFCLYLIHIIAL). Residue aspartate 156 is a short sequence motif, D1. A short sequence motif (D2) is located at residue aspartate 208. Position 302 (aspartate 302) is a short sequence motif, D3. Aspartate 302 (proton acceptor) is an active-site residue. The (Q/R)XXRW motif lies at 338 to 342 (RICRW). The next 2 helical transmembrane spans lie at 367–387 (LIMAFSLNHLVGLNIMPILIL) and 415–435 (FMLIWLLRELTAPFVFIKALL).

The protein belongs to the glycosyltransferase 2 family. As to expression, expressed in pharyngeal intestinal valve, intestinal rectal valve and hypodermis.

Its subcellular location is the membrane. It catalyses the reaction an N-acylsphing-4-enine + UDP-alpha-D-glucose = a beta-D-glucosyl-(1&lt;-&gt;1')-N-acylsphing-4-enine + UDP + H(+). The enzyme catalyses an N-acyl-15-methylhexadecasphing-4-enine + UDP-alpha-D-glucose = an N-acyl-1-beta-D-glucosyl-15-methylhexadecasphing-4-enine + UDP + H(+). It participates in lipid metabolism; sphingolipid metabolism. Functionally, catalyzes the first glycosylation step in glycosphingolipid biosynthesis, the transfer of glucose to ceramide to produce glucosylceramides (GlcCer). GlcCer are known to contribute to the physical properties and physiological functions of membranes and may regulate signal transduction. Seems to be the major active form in the nematode. Only branched-chain sphingoid bases like 15-methylhexadecasphing-4-enine are used for generating complex sphingolipids in Caenorhabditis elegans. Together with cgt-1, plays a role in the trafficking of proteins such as mig-14 to the cell membrane in intestinal cells. The chain is Ceramide glucosyltransferase 3 from Caenorhabditis elegans.